Consider the following 408-residue polypeptide: Protein trichome birefringence-like 14 (408 aa).

A helical; Signal-anchor for type II membrane protein membrane pass occupies residues 11 to 31; the sequence is GSVSLALIVLILLVIILLVSE. Residues 131 to 133 carry the GDS motif motif; sequence GDS. The DCXHWCLPGXXDXWN motif signature appears at 387-401; it reads DCLHWCLPGIPDTWN.

It belongs to the PC-esterase family. TBL subfamily.

Its subcellular location is the membrane. In terms of biological role, may act as a bridging protein that binds pectin and other cell wall polysaccharides. Probably involved in maintaining esterification of pectins. May be involved in the specific O-acetylation of cell wall polymers. This is Protein trichome birefringence-like 14 (TBL14) from Arabidopsis thaliana (Mouse-ear cress).